The sequence spans 704 residues: Ion-translocating oxidoreductase complex subunit C (704 aa).

4Fe-4S ferredoxin-type domains lie at 368–397 (MGAP…QQLY) and 407–436 (KATA…VQYF). Residues cysteine 377, cysteine 380, cysteine 383, cysteine 387, cysteine 416, cysteine 419, cysteine 422, and cysteine 426 each coordinate [4Fe-4S] cluster. The segment at 536–684 (RAKQAAHPMA…PADPRKAAVA (149 aa)) is disordered. Low complexity predominate over residues 556–565 (KAAVEAAIAR).

Belongs to the 4Fe4S bacterial-type ferredoxin family. RnfC subfamily. In terms of assembly, the complex is composed of six subunits: RsxA, RsxB, RsxC, RsxD, RsxE and RsxG. It depends on [4Fe-4S] cluster as a cofactor.

Its subcellular location is the cell inner membrane. Part of a membrane-bound complex that couples electron transfer with translocation of ions across the membrane. Required to maintain the reduced state of SoxR. The polypeptide is Ion-translocating oxidoreductase complex subunit C (Salmonella choleraesuis (strain SC-B67)).